A 61-amino-acid polypeptide reads, in one-letter code: Small ribosomal subunit protein uS14B (61 aa).

Residues C24, C27, C40, and C43 each coordinate Zn(2+).

This sequence belongs to the universal ribosomal protein uS14 family. Zinc-binding uS14 subfamily. In terms of assembly, part of the 30S ribosomal subunit. Contacts proteins S3 and S10. Requires Zn(2+) as cofactor.

In terms of biological role, binds 16S rRNA, required for the assembly of 30S particles and may also be responsible for determining the conformation of the 16S rRNA at the A site. This is Small ribosomal subunit protein uS14B from Salinispora arenicola (strain CNS-205).